The primary structure comprises 117 residues: Large ribosomal subunit protein uL18 (117 aa).

Belongs to the universal ribosomal protein uL18 family. In terms of assembly, part of the 50S ribosomal subunit; part of the 5S rRNA/L5/L18/L25 subcomplex. Contacts the 5S and 23S rRNAs.

Functionally, this is one of the proteins that bind and probably mediate the attachment of the 5S RNA into the large ribosomal subunit, where it forms part of the central protuberance. This is Large ribosomal subunit protein uL18 from Actinobacillus succinogenes (strain ATCC 55618 / DSM 22257 / CCUG 43843 / 130Z).